The primary structure comprises 178 residues: Crossover junction endodeoxyribonuclease RuvC (178 aa).

Catalysis depends on residues Asp-7, Glu-68, and Asp-141. Asp-7, Glu-68, and Asp-141 together coordinate Mg(2+).

It belongs to the RuvC family. Homodimer which binds Holliday junction (HJ) DNA. The HJ becomes 2-fold symmetrical on binding to RuvC with unstacked arms; it has a different conformation from HJ DNA in complex with RuvA. In the full resolvosome a probable DNA-RuvA(4)-RuvB(12)-RuvC(2) complex forms which resolves the HJ. Mg(2+) serves as cofactor.

Its subcellular location is the cytoplasm. It catalyses the reaction Endonucleolytic cleavage at a junction such as a reciprocal single-stranded crossover between two homologous DNA duplexes (Holliday junction).. The RuvA-RuvB-RuvC complex processes Holliday junction (HJ) DNA during genetic recombination and DNA repair. Endonuclease that resolves HJ intermediates. Cleaves cruciform DNA by making single-stranded nicks across the HJ at symmetrical positions within the homologous arms, yielding a 5'-phosphate and a 3'-hydroxyl group; requires a central core of homology in the junction. The consensus cleavage sequence is 5'-(A/T)TT(C/G)-3'. Cleavage occurs on the 3'-side of the TT dinucleotide at the point of strand exchange. HJ branch migration catalyzed by RuvA-RuvB allows RuvC to scan DNA until it finds its consensus sequence, where it cleaves and resolves the cruciform DNA. This chain is Crossover junction endodeoxyribonuclease RuvC, found in Parafrankia sp. (strain EAN1pec).